Consider the following 286-residue polypeptide: NAD(P)H azoreductase (286 aa).

NADP(+) is bound by residues 6-11 (GGTGTI), Arg31, and 136-141 (GFFMQN).

Belongs to the NmrA-type oxidoreductase family. Azoreductase type 3 subfamily. As to quaternary structure, monomer.

In terms of biological role, catalyzes the reductive cleavage of azo bond in aromatic azo compounds to the corresponding amines. Uses preferentially NADPH rather than NADH as an electron donor for its activity. The enzyme reductively cleaved Orange II and carboxy-Orange II, and can also reduce several sulfonated structural analogs, which carry a hydroxy group in the 2 position of the naphthol ring. This Xenophilus azovorans protein is NAD(P)H azoreductase (azoB).